The sequence spans 435 residues: Fez family zinc finger protein 2 (435 aa).

Positions 27 to 42 (SLAFSIERIMAKTSEP) match the Engrailed homology 1 repressor motif. C2H2-type zinc fingers lie at residues 254–276 (FTCE…MPVH), 282–304 (FVCK…KIIH), 310–332 (HKCN…IRIH), 338–360 (FVCE…KLTH), 366–388 (YKCT…MHTH), and 394–417 (FTCG…RKLH).

It belongs to the krueppel C2H2-type zinc-finger protein family.

It is found in the nucleus. Its function is as follows. Transcription repressor. Component of the regulatory cascade that controls the development of dopaminergic (DA) and serotonergic (5HT) neurons. The polypeptide is Fez family zinc finger protein 2 (fezf2) (Xenopus tropicalis (Western clawed frog)).